A 211-amino-acid chain; its full sequence is 2,3-bisphosphoglycerate-dependent phosphoglycerate mutase (211 aa).

Substrate contacts are provided by residues 9–16 (RHGQSDWN), 22–23 (TG), Arg-61, 88–91 (ERDY), Lys-99, 115–116 (RR), and 159–160 (GN). The Tele-phosphohistidine intermediate role is filled by His-10. Glu-88 acts as the Proton donor/acceptor in catalysis.

Belongs to the phosphoglycerate mutase family. BPG-dependent PGAM subfamily. In terms of assembly, homodimer.

The enzyme catalyses (2R)-2-phosphoglycerate = (2R)-3-phosphoglycerate. It functions in the pathway carbohydrate degradation; glycolysis; pyruvate from D-glyceraldehyde 3-phosphate: step 3/5. Catalyzes the interconversion of 2-phosphoglycerate and 3-phosphoglycerate. The protein is 2,3-bisphosphoglycerate-dependent phosphoglycerate mutase of Rhizobium johnstonii (strain DSM 114642 / LMG 32736 / 3841) (Rhizobium leguminosarum bv. viciae).